We begin with the raw amino-acid sequence, 376 residues long: N-acetyldiaminopimelate deacetylase (376 aa).

Asp-69 is an active-site residue. The active-site Proton acceptor is Glu-128.

It belongs to the peptidase M20A family. N-acetyldiaminopimelate deacetylase subfamily.

The enzyme catalyses N-acetyl-(2S,6S)-2,6-diaminopimelate + H2O = (2S,6S)-2,6-diaminopimelate + acetate. It participates in amino-acid biosynthesis; L-lysine biosynthesis via DAP pathway; LL-2,6-diaminopimelate from (S)-tetrahydrodipicolinate (acetylase route): step 3/3. In terms of biological role, catalyzes the conversion of N-acetyl-diaminopimelate to diaminopimelate and acetate. This Streptococcus pneumoniae serotype 19F (strain G54) protein is N-acetyldiaminopimelate deacetylase.